Consider the following 208-residue polypeptide: Methionine-R-sulfoxide reductase B1 (208 aa).

Over residues Gln-27–Tyr-36 the composition is skewed to basic and acidic residues. The segment at Gln-27–Glu-48 is disordered. In terms of domain architecture, MsrB spans Lys-54–Ala-188. Zn(2+) contacts are provided by Cys-93, Cys-96, Cys-154, and Cys-157. Cys-111 and Cys-177 form a disulfide bridge. Catalysis depends on Cys-177, which acts as the Nucleophile. The interval Asp-189–Gln-208 is disordered.

It belongs to the MsrB Met sulfoxide reductase family. Zn(2+) is required as a cofactor. Present in the embryonic nervous system (brain and cord) in neuronal cell bodies, along axons. Also present in embryonic muscles in motor axons. Localizes to growing bristle tips where it is distributed in small puntae. Present at and at sites of actin localization.

Its subcellular location is the cytoplasm. The protein localises to the nucleus. The protein resides in the cytoskeleton. The catalysed reaction is L-methionyl-[protein] + [thioredoxin]-disulfide + H2O = L-methionyl-(R)-S-oxide-[protein] + [thioredoxin]-dithiol. Its function is as follows. Methionine-sulfoxide reductase that specifically reduces methionine (R)-sulfoxide back to methionine. While in many cases methionine oxidation is the result of random oxidation following oxidative stress, methionine oxidation is also a post-translational modification that takes place on specific residues. Acts as a regulator of actin assembly by reducing methionine (R)-sulfoxide mediated by Mical on actin thereby promoting filament repolymerization. In Drosophila melanogaster (Fruit fly), this protein is Methionine-R-sulfoxide reductase B1 (SelR).